The sequence spans 246 residues: MYTRYSYNPSLGRTYVYDNKYYKNLGAVIKNAKRKKHQIEHEAEEHTLDPLDKYLVAEDPFLGPGKNQKLTLFKEIRNVKPDTMKLVVNWSGKEFLRETWTRFMEDSFPIVNDQEIMDVFLVINMRPTRPNRCFRFLAQHALRCDPEYVPHEVIRIVEPSYVGSNNEYRISLAKRGGGCPVMNLHAEYTNSFEEFINRVHWENFYKPIVYVGTDSAEEEEILLEVSLVFKIKEFAPDAPLYSGPAY.

The protein belongs to the polyhedrin family.

Major component of the virus occlusion bodies, which are large proteinaceous structures (polyhedra), that protect the virus from the outside environment for extended periods until they are ingested by insect larvae. In Lepidoptera (butterflies and moths), this protein is Polyhedrin (PH).